The following is a 37-amino-acid chain: Cytochrome b6-f complex subunit 5 (37 aa).

The chain crosses the membrane as a helical span at residues 5 to 25 (LLSGVVLGLILVTLSGLFFAA).

It belongs to the PetG family. In terms of assembly, the 4 large subunits of the cytochrome b6-f complex are cytochrome b6, subunit IV (17 kDa polypeptide, PetD), cytochrome f and the Rieske protein, while the 4 small subunits are PetG, PetL, PetM and PetN. The complex functions as a dimer.

The protein resides in the cellular thylakoid membrane. In terms of biological role, component of the cytochrome b6-f complex, which mediates electron transfer between photosystem II (PSII) and photosystem I (PSI), cyclic electron flow around PSI, and state transitions. PetG is required for either the stability or assembly of the cytochrome b6-f complex. This Trichodesmium erythraeum (strain IMS101) protein is Cytochrome b6-f complex subunit 5.